We begin with the raw amino-acid sequence, 449 residues long: Glycine--tRNA ligase (449 aa).

Substrate-binding residues include arginine 100 and glutamate 158. Residues 190–192, 200–205, 275–276, and 319–322 each bind ATP; these read RNE, FRVREF, EL, and GIER. A substrate-binding site is contributed by 205-209; that stretch reads FEQFE. Residue 315 to 319 coordinates substrate; sequence EPSVG.

It belongs to the class-II aminoacyl-tRNA synthetase family. In terms of assembly, homodimer.

It is found in the cytoplasm. It catalyses the reaction tRNA(Gly) + glycine + ATP = glycyl-tRNA(Gly) + AMP + diphosphate. Catalyzes the attachment of glycine to tRNA(Gly). This Mycoplasma pneumoniae (strain ATCC 29342 / M129 / Subtype 1) (Mycoplasmoides pneumoniae) protein is Glycine--tRNA ligase.